Consider the following 530-residue polypeptide: Laccase-2 (530 aa).

The N-terminal stretch at 1 to 23 (MLLSSAFVGSCLAILNFAAAVSA) is a signal peptide. Plastocyanin-like domains follow at residues 36 to 154 (NKVI…YDPE) and 167 to 311 (TTII…RYTN). A glycan (N-linked (GlcNAc...) asparagine) is linked at Asn82. His88 and His90 together coordinate Cu cation. Intrachain disulfides connect Cys109–Cys520 and Cys141–Cys228. A glycan (N-linked (GlcNAc...) asparagine) is linked at Asn120. Cu cation-binding residues include His133 and His135. Residues Asn191, Asn240, Asn292, Asn311, Asn366, Asn375, Asn392, and Asn412 are each glycosylated (N-linked (GlcNAc...) asparagine). Residues 379-504 (YVNPTVPVLL…FAVVLAEAPQ (126 aa)) enclose the Plastocyanin-like 3 domain. Cu cation-binding residues include His428, His431, His433, His484, Cys485, His486, and His490.

It belongs to the multicopper oxidase family. Cu cation serves as cofactor.

The protein resides in the secreted. It catalyses the reaction 4 hydroquinone + O2 = 4 benzosemiquinone + 2 H2O. Inhibited by chloride ions. Inhibited by citrate. Inhibited by oxalate. Activated by acetate. In vitro, has activity towards 2,2'-azino-bis(3-ethylbenzthiazoline-6-sulfonic acid) (ABTS), 2,6-dimethoxy-phenol, and guaiacol. Although brown rot fungi preferentially degrade hemicellulose and cellulose, the enzyme may contribute to generating small amounts of lignin breakdown products required for catalytic reactions. The sequence is that of Laccase-2 from Fomitopsis schrenkii (Brown rot fungus).